A 200-amino-acid polypeptide reads, in one-letter code: Endoribonuclease YbeY (200 aa).

3 residues coordinate Zn(2+): histidine 120, histidine 124, and histidine 130.

It belongs to the endoribonuclease YbeY family. Requires Zn(2+) as cofactor.

The protein resides in the cytoplasm. Its function is as follows. Single strand-specific metallo-endoribonuclease involved in late-stage 70S ribosome quality control and in maturation of the 3' terminus of the 16S rRNA. In Corynebacterium efficiens (strain DSM 44549 / YS-314 / AJ 12310 / JCM 11189 / NBRC 100395), this protein is Endoribonuclease YbeY.